The chain runs to 451 residues: Protein NINJA homolog 1 (451 aa).

3 disordered regions span residues 1–223, 321–346, and 427–451; these read MDDE…QGNP, ISQA…DDKK, and DAPG…SAQN. A compositionally biased stretch (basic and acidic residues) spans 23–35; sequence KARDAPLEPKAEP. Composition is skewed to polar residues over residues 38–49, 86–103, and 143–153; these read EESSSKGVSQTP, PGSS…QKPV, and ISISTDDGSTG. The segment covering 154 to 163 has biased composition (acidic residues); the sequence is ENEDVAESEA. Over residues 207 to 216 the composition is skewed to low complexity; it reads SFSGSESSSG.

This sequence belongs to the Ninja family. As to quaternary structure, interacts with TIFY10C/JAZ8. Interacts with TIFY11A/JAZ9.

Its subcellular location is the nucleus. This is Protein NINJA homolog 1 from Oryza sativa subsp. japonica (Rice).